A 434-amino-acid polypeptide reads, in one-letter code: uncharacterized protein (434 aa).

A signal peptide spans 1–17; that stretch reads MTFLLFQLLVLLRYSIG. Transmembrane regions (helical) follow at residues 48–68, 70–90, 112–132, 141–161, 173–193, 206–226, 232–252, 271–291, 305–325, 344–364, 380–400, and 404–424; these read AAIS…FTVL, EWVY…SVTA, YRVA…FTIF, TYGT…NAVV, WITG…RLVT, YGVH…TSFV, YCGL…LSGL, EGVY…HLGY, TSSI…TILF, WVLA…YIPL, ATFL…DTIF, and FSSL…IGTI.

The protein resides in the membrane. This is an uncharacterized protein from Arabidopsis thaliana (Mouse-ear cress).